A 266-amino-acid chain; its full sequence is Movement protein (266 aa).

Residues 212-227 show a composition bias toward basic residues; sequence KTKKGKKRKKEKKKRV. The tract at residues 212–266 is disordered; that stretch reads KTKKGKKRKKEKKKRVVGNSVNNKKINNSGKKGLKVEEIEDNVSDDESIASSSTF. A compositionally biased stretch (low complexity) spans 228–242; sequence VGNSVNNKKINNSGK. A compositionally biased stretch (acidic residues) spans 249–259; it reads EIEDNVSDDES.

The protein belongs to the tobamovirus movement protein family.

The protein localises to the host cytoplasm. Its subcellular location is the host cytoskeleton. It localises to the host cell junction. The protein resides in the host plasmodesma. Functionally, transports viral genome to neighboring plant cells directly through plasmosdesmata, without any budding. The movement protein allows efficient cell to cell propagation, by bypassing the host cell wall barrier. Forms a ribonucleoprotein complex with viral RNA. Binds microtubules and modulates microtubule stability. Can bind double-stranded DNA. The polypeptide is Movement protein (MP) (Capsicum annuum (Capsicum pepper)).